A 1453-amino-acid polypeptide reads, in one-letter code: NK-tumor recognition protein (1453 aa).

A PPIase cyclophilin-type domain is found at His-10–Val-175. A disordered region spans residues Lys-187–Lys-625. Residues Ser-195–Glu-213 are compositionally biased toward low complexity. A compositionally biased stretch (basic residues) spans Ile-221–Lys-240. The segment covering Tyr-259 to Glu-286 has biased composition (basic and acidic residues). Residue Lys-323 forms a Glycyl lysine isopeptide (Lys-Gly) (interchain with G-Cter in SUMO2) linkage. The segment covering Ser-329–Arg-348 has biased composition (basic residues). Residues Ser-379, Ser-401, and Ser-416 each carry the phosphoserine modification. A compositionally biased stretch (basic and acidic residues) spans Lys-382–Leu-402. Residues Ser-403–Ala-421 are compositionally biased toward polar residues. The span at Asp-425–Ile-460 shows a compositional bias: basic residues. A compositionally biased stretch (basic and acidic residues) spans Ser-514–Gly-531. 2 stretches are compositionally biased toward low complexity: residues Ser-532–Leu-546 and Ser-554–Ser-565. Residues Lys-576 and Lys-579 each participate in a glycyl lysine isopeptide (Lys-Gly) (interchain with G-Cter in SUMO2) cross-link. A Phosphoserine modification is found at Ser-611. A Glycyl lysine isopeptide (Lys-Gly) (interchain with G-Cter in SUMO2) cross-link involves residue Lys-637. Position 646 is a phosphoserine (Ser-646). Positions Thr-651–Ser-661 are enriched in polar residues. The segment at Thr-651–Ser-1453 is disordered. Glycyl lysine isopeptide (Lys-Gly) (interchain with G-Cter in SUMO2) cross-links involve residues Lys-654 and Lys-664. Low complexity-rich tracts occupy residues Arg-682–Ser-726 and Ser-736–Ser-749. The span at Ala-755–Arg-772 shows a compositional bias: basic residues. The segment covering Ser-773 to Lys-789 has biased composition (basic and acidic residues). A compositionally biased stretch (low complexity) spans Ser-799–Ser-809. 2 stretches are compositionally biased toward basic and acidic residues: residues Pro-820–Arg-852 and Lys-859–Ser-868. Phosphoserine is present on residues Ser-880, Ser-882, Ser-884, and Ser-900. Basic and acidic residues predominate over residues Asp-887–Lys-902. The span at Glu-903–Ser-913 shows a compositional bias: acidic residues. Residues Ser-948–Ser-958 are compositionally biased toward low complexity. A compositionally biased stretch (basic and acidic residues) spans Glu-966–Thr-982. The segment covering Lys-983–Ala-1005 has biased composition (basic residues). Residues Asp-1030–Lys-1045 show a composition bias toward basic and acidic residues. 2 positions are modified to phosphoserine: Ser-1139 and Ser-1148. The span at Gln-1170 to Leu-1180 shows a compositional bias: polar residues. Low complexity predominate over residues Ser-1189–Thr-1199. Ser-1195 is subject to Phosphoserine. Residues Lys-1208 and Lys-1249 each participate in a glycyl lysine isopeptide (Lys-Gly) (interchain with G-Cter in SUMO2) cross-link. Residues Arg-1303 to Ser-1453 are arg/Ser tandem repeat-rich. A compositionally biased stretch (low complexity) spans Ser-1322–Arg-1346. Positions His-1369 to Ser-1379 are enriched in basic residues. Residues Arg-1380–Arg-1401 show a composition bias toward low complexity. A compositionally biased stretch (basic residues) spans Arg-1416 to Ser-1426.

The protein localises to the cell membrane. The catalysed reaction is [protein]-peptidylproline (omega=180) = [protein]-peptidylproline (omega=0). With respect to regulation, inhibited by cyclosporin A (CsA). PPIase that catalyzes the cis-trans isomerization of proline imidic peptide bonds in oligopeptides and may therefore assist protein folding. Component of a putative tumor-recognition complex involved in the function of NK cells. The protein is NK-tumor recognition protein of Mus musculus (Mouse).